The following is a 69-amino-acid chain: MKYLLIALVRGYQYAISPFLGRSCRYVPTCSEYMVDAVQKHGAFRGGWLGVKRVCRCHPWHPGGYDPVP.

This sequence belongs to the UPF0161 family.

It is found in the cell inner membrane. Could be involved in insertion of integral membrane proteins into the membrane. In Dechloromonas aromatica (strain RCB), this protein is Putative membrane protein insertion efficiency factor.